Reading from the N-terminus, the 230-residue chain is Ribonuclease HII (230 aa).

Positions 28–217 (FRIAGIDEAG…VKEHLPSQPD (190 aa)) constitute an RNase H type-2 domain. The a divalent metal cation site is built by aspartate 34, glutamate 35, and aspartate 126. Residues 211 to 230 (HLPSQPDCDTAGPSTGLFSF) form a disordered region.

The protein belongs to the RNase HII family. The cofactor is Mn(2+). Requires Mg(2+) as cofactor.

The protein localises to the cytoplasm. It carries out the reaction Endonucleolytic cleavage to 5'-phosphomonoester.. Functionally, endonuclease that specifically degrades the RNA of RNA-DNA hybrids. The chain is Ribonuclease HII from Geobacter sp. (strain M21).